We begin with the raw amino-acid sequence, 169 residues long: Ribosome maturation factor RimM (169 aa).

Positions 95-168 constitute a PRC barrel domain; that stretch reads PPDTAYIHDL…EMTIRRFDEF (74 aa).

This sequence belongs to the RimM family. As to quaternary structure, binds ribosomal protein uS19.

The protein resides in the cytoplasm. In terms of biological role, an accessory protein needed during the final step in the assembly of 30S ribosomal subunit, possibly for assembly of the head region. Essential for efficient processing of 16S rRNA. May be needed both before and after RbfA during the maturation of 16S rRNA. It has affinity for free ribosomal 30S subunits but not for 70S ribosomes. This chain is Ribosome maturation factor RimM, found in Prosthecochloris aestuarii (strain DSM 271 / SK 413).